The sequence spans 283 residues: 4-diphosphocytidyl-2-C-methyl-D-erythritol kinase (283 aa).

Lys10 is an active-site residue. Position 99–109 (99–109 (PMGGGLGGGSS)) interacts with ATP. Asp141 is a catalytic residue.

This sequence belongs to the GHMP kinase family. IspE subfamily. As to quaternary structure, homodimer.

It catalyses the reaction 4-CDP-2-C-methyl-D-erythritol + ATP = 4-CDP-2-C-methyl-D-erythritol 2-phosphate + ADP + H(+). Its pathway is isoprenoid biosynthesis; isopentenyl diphosphate biosynthesis via DXP pathway; isopentenyl diphosphate from 1-deoxy-D-xylulose 5-phosphate: step 3/6. Functionally, catalyzes the phosphorylation of the position 2 hydroxy group of 4-diphosphocytidyl-2C-methyl-D-erythritol. This chain is 4-diphosphocytidyl-2-C-methyl-D-erythritol kinase, found in Salmonella enteritidis PT4 (strain P125109).